Here is a 344-residue protein sequence, read N- to C-terminus: Heat-inducible transcription repressor HrcA (344 aa).

Belongs to the HrcA family.

Negative regulator of class I heat shock genes (grpE-dnaK-dnaJ and groELS operons). Prevents heat-shock induction of these operons. This is Heat-inducible transcription repressor HrcA from Streptococcus mutans serotype c (strain ATCC 700610 / UA159).